The chain runs to 407 residues: Argininosuccinate synthase (407 aa).

ATP is bound by residues 10–18 (AYSGGLDTS) and alanine 37. L-citrulline contacts are provided by tyrosine 88 and serine 93. Glycine 118 serves as a coordination point for ATP. Residues threonine 120, asparagine 124, and aspartate 125 each contribute to the L-aspartate site. An L-citrulline-binding site is contributed by asparagine 124. L-citrulline is bound by residues arginine 128, serine 179, serine 188, glutamate 264, and tyrosine 276.

It belongs to the argininosuccinate synthase family. Type 1 subfamily. Homotetramer.

The protein resides in the cytoplasm. The catalysed reaction is L-citrulline + L-aspartate + ATP = 2-(N(omega)-L-arginino)succinate + AMP + diphosphate + H(+). The protein operates within amino-acid biosynthesis; L-arginine biosynthesis; L-arginine from L-ornithine and carbamoyl phosphate: step 2/3. In Jannaschia sp. (strain CCS1), this protein is Argininosuccinate synthase.